The chain runs to 386 residues: Enoyl-[acyl-carrier-protein] reductase 1, mitochondrial (386 aa).

The N-terminal 22 residues, 1 to 22, are a transit peptide targeting the mitochondrion; sequence MYSVLKQSIRPRLLATHNQFRT. Residue Tyr-79 is the Proton donor of the active site. NADP(+)-binding positions include Asn-172, 199–202, 222–224, 296–299, 321–323, and Lys-381; these read TSAV, RDR, YGGM, and FWV.

It belongs to the zinc-containing alcohol dehydrogenase family. Quinone oxidoreductase subfamily. In terms of assembly, homodimer and heterodimer with ETR2.

It localises to the mitochondrion. It carries out the reaction a 2,3-saturated acyl-[ACP] + NADP(+) = a (2E)-enoyl-[ACP] + NADPH + H(+). The enzyme catalyses (2E,4E)-hexadienoyl-CoA + NADPH + H(+) = (4E)-hexenoyl-CoA + NADP(+). The catalysed reaction is (2E)-hexenoyl-CoA + NADPH + H(+) = hexanoyl-CoA + NADP(+). In terms of biological role, catalyzes the NADPH-dependent reduction of trans-2-enoyl thioesters in mitochondrial fatty acid synthesis (fatty acid synthesis type II). Fatty acid chain elongation in mitochondria uses acyl carrier protein (ACP) as an acyl group carrier, but the enzyme accepts both ACP and CoA thioesters as substrates in vitro. Required for respiration and the maintenance of the mitochondrial compartment. This chain is Enoyl-[acyl-carrier-protein] reductase 1, mitochondrial (ETR1), found in Candida tropicalis (Yeast).